Here is a 420-residue protein sequence, read N- to C-terminus: MLKIGVIADDFTGATDIASFLVENGMPTVQINDVPTGTQPEGCDAVVISLKTRSCPAQEAIKQSLAALVWLKKQGCQQVYFKYCSTFDSTAEGNIGPVTDALMVALDTSFTVISPALPVNGRTVYQGYLFVMNHLLAESGMRHHPINPMTDSYLPRLMEAQAQGRCGVIPAQTLDEGVAATRAALSRLQQEGYRYAVLDALNERHLEIQGEVLRDAPLVTGGSGLAMGLARQWAKHGVSQARSAGYPLSGRAVVLSGSCSQMTNQQVAFYRQHAPTRDVDVARCLSSETREAYAEALAQWVLSQDSELAPMISATASTQALAAIQQQYGATEASHAVEALFSLLAARLAEGGITRFIVAGGETSGVVTQSLGITGFHIGPCISPGVPWVNALHAPVSLALKSGNFGDESFFIRAQREFQV.

ATP contacts are provided by residues Ser-258, 360–363, and Gly-403; that span reads GGET.

It belongs to the four-carbon acid sugar kinase family.

It carries out the reaction 3-dehydro-L-erythronate + ATP = 3-dehydro-4-O-phospho-L-erythronate + ADP + H(+). The catalysed reaction is 3-dehydro-D-erythronate + ATP = 3-dehydro-4-O-phospho-D-erythronate + ADP + H(+). Its function is as follows. Catalyzes the ATP-dependent phosphorylation of 3-oxo-tetronate to 3-oxo-tetronate 4-phosphate. In Salmonella typhimurium (strain LT2 / SGSC1412 / ATCC 700720), this protein is 3-oxo-tetronate kinase.